Reading from the N-terminus, the 440-residue chain is Chromosome partition protein MukF (440 aa).

A leucine-zipper region spans residues 208-236 (LDETSGNLRELQDTLNAAGDKLQSQLLRI).

The protein belongs to the MukF family. Interacts, and probably forms a ternary complex, with MukE and MukB via its C-terminal region. The complex formation is stimulated by calcium or magnesium. It is required for an interaction between MukE and MukB.

It localises to the cytoplasm. The protein resides in the nucleoid. Involved in chromosome condensation, segregation and cell cycle progression. May participate in facilitating chromosome segregation by condensation DNA from both sides of a centrally located replisome during cell division. Not required for mini-F plasmid partitioning. Probably acts via its interaction with MukB and MukE. Overexpression results in anucleate cells. It has a calcium binding activity. In Histophilus somni (strain 2336) (Haemophilus somnus), this protein is Chromosome partition protein MukF.